The following is a 206-amino-acid chain: Protein GrpE (206 aa).

The span at 1–10 shows a compositional bias: basic and acidic residues; that stretch reads MTDPDLHQND. The interval 1 to 38 is disordered; that stretch reads MTDPDLHQNDPENPAQASEPVVSKPYIMPDDPETGSAE.

This sequence belongs to the GrpE family. Homodimer.

The protein resides in the cytoplasm. Functionally, participates actively in the response to hyperosmotic and heat shock by preventing the aggregation of stress-denatured proteins, in association with DnaK and GrpE. It is the nucleotide exchange factor for DnaK and may function as a thermosensor. Unfolded proteins bind initially to DnaJ; upon interaction with the DnaJ-bound protein, DnaK hydrolyzes its bound ATP, resulting in the formation of a stable complex. GrpE releases ADP from DnaK; ATP binding to DnaK triggers the release of the substrate protein, thus completing the reaction cycle. Several rounds of ATP-dependent interactions between DnaJ, DnaK and GrpE are required for fully efficient folding. This chain is Protein GrpE, found in Bradyrhizobium sp. (strain ORS 278).